A 503-amino-acid chain; its full sequence is Poxin-Schlafen (503 aa).

The Proton donor role is filled by histidine 15. Tyrosine 136 functions as the Shared with catalytic histidine of dimeric partner in the catalytic mechanism. Residue lysine 140 is the Proton acceptor; shared with catalytic histidine of dimeric partner of the active site.

The protein in the N-terminal section; belongs to the poxin family. It in the C-terminal section; belongs to the Schlafen protein family. Subgroup poxviridae B3 subfamily. As to quaternary structure, homodimer.

It catalyses the reaction 2',3'-cGAMP + H2O = Gp(2'-5')Ap(3') + H(+). In terms of biological role, nuclease that is responsible for viral evasion of host cGAS-STING innate immunity. Cleaves 2',3'-cGAMP which is produced by host cGAS following recognition of cytosolic DNA and blocks the subsequent 2',3'-cGAMP-mediated activation of TMEM173/STING, which normally spreads to adjacent cells and activates the interferon and NF-kappa-B immune responses. This is Poxin-Schlafen (OPG188) from Cynomys gunnisoni (Gunnison's prairie dog).